We begin with the raw amino-acid sequence, 180 residues long: Translation initiation factor IF-3 (180 aa).

It belongs to the IF-3 family. As to quaternary structure, monomer.

Its subcellular location is the cytoplasm. Functionally, IF-3 binds to the 30S ribosomal subunit and shifts the equilibrium between 70S ribosomes and their 50S and 30S subunits in favor of the free subunits, thus enhancing the availability of 30S subunits on which protein synthesis initiation begins. The polypeptide is Translation initiation factor IF-3 (Pectobacterium atrosepticum (strain SCRI 1043 / ATCC BAA-672) (Erwinia carotovora subsp. atroseptica)).